We begin with the raw amino-acid sequence, 140 residues long: Nucleoside diphosphate kinase (140 aa).

ATP-binding residues include lysine 11, phenylalanine 59, arginine 87, threonine 93, arginine 104, and asparagine 114. The active-site Pros-phosphohistidine intermediate is histidine 117.

The protein belongs to the NDK family. As to quaternary structure, homotetramer. The cofactor is Mg(2+).

It localises to the cytoplasm. The enzyme catalyses a 2'-deoxyribonucleoside 5'-diphosphate + ATP = a 2'-deoxyribonucleoside 5'-triphosphate + ADP. It catalyses the reaction a ribonucleoside 5'-diphosphate + ATP = a ribonucleoside 5'-triphosphate + ADP. Major role in the synthesis of nucleoside triphosphates other than ATP. The ATP gamma phosphate is transferred to the NDP beta phosphate via a ping-pong mechanism, using a phosphorylated active-site intermediate. The chain is Nucleoside diphosphate kinase from Novosphingobium aromaticivorans (strain ATCC 700278 / DSM 12444 / CCUG 56034 / CIP 105152 / NBRC 16084 / F199).